We begin with the raw amino-acid sequence, 915 residues long: MDIPQGGVIMNHFALALRGLNCMGCARKLERQLNQDLTVEIETLTPTSIELHTHATLNEVLTSIESLGYQGGTEQTYQLQGLNCGRCVNKLTTHLSAQAEIAKLHVSKERLSLVTTLTAEQVKALVAEVGYQAIEAEQESTFAPAASIDEKETDTPDAENSSNTEATEASSQTLSLLIKGMTCASCVASVEKALLSVEGVQSAQVNLTEQSALVRGIFANPQPLLNAIQSSGYQAEILDDPAQQQAKQQAQLEALQKEHKQSALLGIALGTPLMLWGVFGGNMMIRNSSDQMVWGGIGTICFALLLTAGRHFFMNAWQALTHGRATMDTLVALGTGAAWFYSMLVVAWPQTFPDAARHVYFEATAMIIGLISLGHYIETKAKSNTNRSLQALLNLQPQQATLVTEQGDQSIAVADIQLGMSLRIKPGEQVPVDGVVSTGHSYLDESMLTGEPIPVLKEAGAKVAAGTLNQDGSLVITATGIGAQTMLARIIQMVRQAQSSKPAMARLADQISSVFVPVVVVIAILSAALWYLYGPDPKASYMLVVATTVLIIACPCALGLATPLSITVGIGKAAEMGILIRDANVLQTASQVDTVVFDKTGTLTLGKPSIQSLHVLQGDENQLLALAYALEQQSEHPLAKAICDYAKQRNISPVEISQFTNQRGRGLLADYQNQTVLVGSLAFMQEQGIDLSMAESTLEKFAAQAWTPVAVAYRGMLQGVLAIADPIKPTSAQAVRKLNELGIHTVMLTGDHTSVANAIAKELGISQVIAQVLPDQKAQHIQALQQQGRKVAMIGDGINDAPALALADIGIAMGSGSDVAIESAQMTLLNSSPTSVVSAIELSKATLRNMKQNLFGAFIYNTLGIPIAAGVLYPAFGFLLSPVVAGAAMALSSITVVSNANRLRWSKISFDQHSQ.

HMA domains follow at residues N11 to G72 and T73 to I134. Cu(+) contacts are provided by C22, C25, C84, and C87. A disordered region spans residues F142–A169. Residues A158 to A169 show a composition bias toward polar residues. The 65-residue stretch at Q172 to E236 folds into the HMA 3 domain. 2 residues coordinate Cu(+): C183 and C186. The next 7 membrane-spanning stretches (helical) occupy residues L265 to I285, V293 to F313, T329 to P349, V359 to T379, L474 to V494, V514 to G534, and Y541 to A561. The active-site 4-aspartylphosphate intermediate is the D598. Mg(2+) is bound by residues D796 and D800. Transmembrane regions (helical) follow at residues A801–I821 and I865–A885.

It belongs to the cation transport ATPase (P-type) (TC 3.A.3) family. Type IB subfamily.

It is found in the cell membrane. It carries out the reaction Cu(+)(in) + ATP + H2O = Cu(+)(out) + ADP + phosphate + H(+). Involved in copper export. In Vibrio cholerae serotype O1 (strain ATCC 39315 / El Tor Inaba N16961), this protein is Copper-exporting P-type ATPase (copA).